The chain runs to 115 residues: Migration and invasion enhancer 1 (115 aa).

Polar residues predominate over residues 1–10; that stretch reads MSGDTGTTSV. The tract at residues 1–22 is disordered; it reads MSGDTGTTSVAPPPGETEPGHG. Ser-2 bears the N-acetylserine mark. Cys-30 and Cys-33 are oxidised to a cystine. Residue Cys-112 is the site of S-geranylgeranyl cysteine attachment. Residues 113–115 constitute a propeptide, removed in mature form; it reads VIL.

The protein belongs to the SelWTH family. In terms of assembly, interacts with GPX1. Post-translationally, isoprenylation facilitates association with the plasma membrane and enhances the migratory phenotype of cells by inducing increased filopodia formation.

It localises to the cytoplasm. The protein resides in the cytosol. It is found in the cell membrane. Functionally, increases cell migration by inducing filopodia formation at the leading edge of migrating cells. Plays a role in regulation of apoptosis, possibly through control of CASP3. May be involved in a redox-related process. The protein is Migration and invasion enhancer 1 (MIEN1) of Bos taurus (Bovine).